The primary structure comprises 135 residues: MTKIVRFGVSVEEDLLENFDKIIENKGYNSRSEAIRDLMRDYIIKEKWNIKSEKVAGSISLIYEHDVYGLSEKLTDIQHHYHDVIISTLHVHLDEKNCMEVILVRGKVEKIKKLYNEISSLKWVRHTNISITDII.

H79, H90, H92, and C98 together coordinate Ni(2+).

It belongs to the transcriptional regulatory CopG/NikR family. It depends on Ni(2+) as a cofactor.

Functionally, transcriptional regulator. This is Putative nickel-responsive regulator from Dictyoglomus thermophilum (strain ATCC 35947 / DSM 3960 / H-6-12).